An 85-amino-acid polypeptide reads, in one-letter code: uncharacterized protein (85 aa).

This is an uncharacterized protein from Sinorhizobium fredii (strain NBRC 101917 / NGR234).